Consider the following 147-residue polypeptide: NADPH-dependent 7-cyano-7-deazaguanine reductase (147 aa).

Residues 1–23 form a disordered region; sequence MQTTHLGKNSPIPQSPEEASLDY. Residue Cys-46 is the Thioimide intermediate of the active site. The active-site Proton donor is Asp-53. Residues 68–70 and 87–88 contribute to the substrate site; these read VES and HE.

The protein belongs to the GTP cyclohydrolase I family. QueF type 1 subfamily.

The protein resides in the cytoplasm. The catalysed reaction is 7-aminomethyl-7-carbaguanine + 2 NADP(+) = 7-cyano-7-deazaguanine + 2 NADPH + 3 H(+). It participates in tRNA modification; tRNA-queuosine biosynthesis. In terms of biological role, catalyzes the NADPH-dependent reduction of 7-cyano-7-deazaguanine (preQ0) to 7-aminomethyl-7-deazaguanine (preQ1). This chain is NADPH-dependent 7-cyano-7-deazaguanine reductase, found in Zymomonas mobilis subsp. mobilis (strain ATCC 31821 / ZM4 / CP4).